The chain runs to 329 residues: Prostaglandin reductase 1 (329 aa).

Phosphothreonine is present on threonine 18. Phosphoserine is present on serine 20. Residues 152–155, lysine 178, tyrosine 193, asparagine 217, 239–245, 270–272, and asparagine 321 contribute to the NADP(+) site; these read GAVG, CGAISQY, and FIV. Lysine 178 carries the N6-(2-hydroxyisobutyryl)lysine; alternate modification. Lysine 178 carries the N6-acetyllysine; alternate modification.

The protein belongs to the NADP-dependent oxidoreductase L4BD family. As to quaternary structure, monomer or homodimer.

It localises to the cytoplasm. The enzyme catalyses 13,14-dihydro-15-oxo-prostaglandin E1 + NADP(+) = 15-oxoprostaglandin E1 + NADPH + H(+). It carries out the reaction 13,14-dihydro-15-oxo-prostaglandin E2 + NADP(+) = 15-oxoprostaglandin E2 + NADPH + H(+). The catalysed reaction is 13,14-dihydro-15-oxo-prostaglandin F1alpha + NADP(+) = 15-oxoprostaglandin F1alpha + NADPH + H(+). It catalyses the reaction 13,14-dihydro-15-oxo-PGF2alpha + NADP(+) = 15-oxoprostaglandin F2alpha + NADPH + H(+). The enzyme catalyses leukotriene B4 + NADP(+) = 12-oxo-leukotriene B4 + NADPH + H(+). It carries out the reaction 20-hydroxy-leukotriene B4 + NADP(+) = 12-oxo-20-hydroxy-leukotriene B4 + NADPH + H(+). The catalysed reaction is 6-trans-leukotriene B4 + NADP(+) = 12-oxo-(5S)-hydroxy-(6E,8E,10E,14Z)-eicosatetraenoate + NADPH + H(+). It catalyses the reaction (5S,12S)-dihydroxy-(6E,10E,12E,14Z)-eicosatetraenoate + NADP(+) = 12-oxo-(5S)-hydroxy-(6E,8E,10E,14Z)-eicosatetraenoate + NADPH + H(+). The enzyme catalyses an n-alkanal + NADP(+) = an alk-2-enal + NADPH + H(+). It carries out the reaction hexanal + NADP(+) = (E)-hex-2-enal + NADPH + H(+). The catalysed reaction is octanal + NADP(+) = (2E)-octenal + NADPH + H(+). It catalyses the reaction decanal + NADP(+) = (2E)-decenal + NADPH + H(+). The enzyme catalyses dodecanal + NADP(+) = (2E)-dodecenal + NADPH + H(+). It carries out the reaction 4-hydroxynonanal + NADP(+) = (E)-4-hydroxynon-2-enal + NADPH + H(+). The catalysed reaction is pentan-2-one + NADP(+) = (E)-pent-3-en-2-one + NADPH + H(+). It catalyses the reaction nonan-2-one + NADP(+) = (3E)-nonen-2-one + NADPH + H(+). In terms of biological role, NAD(P)H-dependent oxidoreductase involved in metabolic inactivation of pro- and anti-inflammatory eicosanoids: prostaglandins (PG), leukotrienes (LT) and lipoxins (LX). Catalyzes with high efficiency the reduction of the 13,14 double bond of 15-oxoPGs, including 15-oxo-PGE1, 15-oxo-PGE2, 15-oxo-PGF1-alpha and 15-oxo-PGF2-alpha. Catalyzes with lower efficiency the oxidation of the hydroxyl group at C12 of LTB4 and its derivatives, converting them into biologically less active 12-oxo-LTB4 metabolites. Reduces 15-oxo-LXA4 to 13,14 dihydro-15-oxo-LXA4, enhancing neutrophil recruitment at the inflammatory site. Plays a role in metabolic detoxification of alkenals and ketones. Reduces alpha,beta-unsaturated alkenals and ketones, particularly those with medium-chain length, showing highest affinity toward (2E)-decenal and (3E)-3-nonen-2-one. Inactivates 4-hydroxy-2-nonenal, a cytotoxic lipid constituent of oxidized low-density lipoprotein particles. The sequence is that of Prostaglandin reductase 1 (Ptgr1) from Rattus norvegicus (Rat).